Reading from the N-terminus, the 147-residue chain is uncharacterized protein (147 aa).

The region spanning 1 to 137 (MRDNTIGSLI…LYELMTKVHK (137 aa)) is the HTH marR-type domain. The H-T-H motif DNA-binding region spans 53 to 76 (QMELAEKVTVTQGGISRMLTRLEK).

This is an uncharacterized protein from Bacillus cereus (strain ATCC 10987 / NRS 248).